Reading from the N-terminus, the 236-residue chain is Ribosome maturation protein SDO1 homolog (236 aa).

Belongs to the SDO1/SBDS family.

The sequence is that of Ribosome maturation protein SDO1 homolog from Pyrococcus abyssi (strain GE5 / Orsay).